We begin with the raw amino-acid sequence, 323 residues long: Ig gamma chain C region (323 aa).

Ig-like domains lie at 6–96 (PSVF…KTVA), 114–213 (PSVF…KTIS), and 222–318 (PKVY…KSIS).

The protein is Ig gamma chain C region of Oryctolagus cuniculus (Rabbit).